A 94-amino-acid chain; its full sequence is Small ribosomal subunit protein uS19 (94 aa).

The segment at 73-94 (EFAPTRTYRGHGKDAERTTRRR) is disordered. Residues 83 to 94 (HGKDAERTTRRR) are compositionally biased toward basic and acidic residues.

It belongs to the universal ribosomal protein uS19 family.

Functionally, protein S19 forms a complex with S13 that binds strongly to the 16S ribosomal RNA. The polypeptide is Small ribosomal subunit protein uS19 (Thermomicrobium roseum (strain ATCC 27502 / DSM 5159 / P-2)).